The chain runs to 206 residues: N-(5'-phosphoribosyl)anthranilate isomerase (206 aa).

Belongs to the TrpF family.

The enzyme catalyses N-(5-phospho-beta-D-ribosyl)anthranilate = 1-(2-carboxyphenylamino)-1-deoxy-D-ribulose 5-phosphate. It participates in amino-acid biosynthesis; L-tryptophan biosynthesis; L-tryptophan from chorismate: step 3/5. This is N-(5'-phosphoribosyl)anthranilate isomerase from Citrifermentans bemidjiense (strain ATCC BAA-1014 / DSM 16622 / JCM 12645 / Bem) (Geobacter bemidjiensis).